An 81-amino-acid chain; its full sequence is Protease inhibitor 3 (81 aa).

An N-terminal signal peptide occupies residues 1–24; it reads MSSGCLLLLLGLLTLWAELTPVSG. One can recognise a BPTI/Kunitz inhibitor domain in the interval 29 to 79; that stretch reads CELPAESGLCNAYIPSFYYNPHSHKCQKFMYGGCGGNANNFKTIVECHRTC. 3 cysteine pairs are disulfide-bonded: Cys29–Cys79, Cys38–Cys62, and Cys54–Cys75.

The protein belongs to the venom Kunitz-type family. In terms of tissue distribution, expressed by the venom gland.

It localises to the secreted. Functionally, snake venom serine protease inhibitor. This is Protease inhibitor 3 from Walterinnesia aegyptia (Desert black snake).